The sequence spans 209 residues: Uracil phosphoribosyltransferase (209 aa).

5-phospho-alpha-D-ribose 1-diphosphate is bound by residues arginine 79, arginine 104, and 131–139; that span reads DPMLATGGS. Uracil contacts are provided by residues isoleucine 194 and 199 to 201; that span reads GDA. Aspartate 200 lines the 5-phospho-alpha-D-ribose 1-diphosphate pocket.

Belongs to the UPRTase family. It depends on Mg(2+) as a cofactor.

It carries out the reaction UMP + diphosphate = 5-phospho-alpha-D-ribose 1-diphosphate + uracil. Its pathway is pyrimidine metabolism; UMP biosynthesis via salvage pathway; UMP from uracil: step 1/1. With respect to regulation, allosterically activated by GTP. Functionally, catalyzes the conversion of uracil and 5-phospho-alpha-D-ribose 1-diphosphate (PRPP) to UMP and diphosphate. In Streptococcus pyogenes serotype M49 (strain NZ131), this protein is Uracil phosphoribosyltransferase.